The following is a 123-amino-acid chain: 13 kDa major membrane protein (123 aa).

It localises to the cell membrane. The polypeptide is 13 kDa major membrane protein (Francisella tularensis subsp. holarctica (strain LVS)).